Here is a 208-residue protein sequence, read N- to C-terminus: FMN-dependent NADH:quinone oxidoreductase (208 aa).

FMN contacts are provided by residues serine 9, 15–17 (SAS), 96–99 (MYNF), and 140–143 (TRGG).

It belongs to the azoreductase type 1 family. In terms of assembly, homodimer. It depends on FMN as a cofactor.

The enzyme catalyses 2 a quinone + NADH + H(+) = 2 a 1,4-benzosemiquinone + NAD(+). The catalysed reaction is N,N-dimethyl-1,4-phenylenediamine + anthranilate + 2 NAD(+) = 2-(4-dimethylaminophenyl)diazenylbenzoate + 2 NADH + 2 H(+). In terms of biological role, quinone reductase that provides resistance to thiol-specific stress caused by electrophilic quinones. Also exhibits azoreductase activity. Catalyzes the reductive cleavage of the azo bond in aromatic azo compounds to the corresponding amines. The chain is FMN-dependent NADH:quinone oxidoreductase from Ralstonia nicotianae (strain ATCC BAA-1114 / GMI1000) (Ralstonia solanacearum).